Here is a 406-residue protein sequence, read N- to C-terminus: MGPSAPLLLFFLLSWPGSLQGQQHHLVEYMERRLAALEERLAQCQDQSSRHAAELRDFKNKMLPLLEVAEKERETLRTEADSISGRVDRLEREVDYLETQNPALPCVELDEKVTGGPGTKGKGRRNEKYDMVTDCSYTISQVRSMKILKRFGGSAGLWTKDPLGPAEKIYVLDGTQNDTAFVFPRLRDFTLTMAARKASRIRVPFPWVGTGQLVYGGFLYYARRPPGGAGGGGELENTLQLIKFHLANRTVVDSSVFPAERLIPPYGLTVDTYIDLAADEEGLWAVYATREDDRHLCLAKLDPQTLDTEQQWDTPCPRENAEAAFVICGTLYVVYNTRPASRARIQCSFDASGTLTPERAALSYFPRRYGAHASLRYNPRERQLYAWDDGYQIVYKLEMKKKEEEV.

Residues 1–21 form the signal peptide; the sequence is MGPSAPLLLFFLLSWPGSLQG. Residues 22–101 adopt a coiled-coil conformation; sequence QQHHLVEYME…REVDYLETQN (80 aa). Positions 134 to 401 constitute an Olfactomedin-like domain; that stretch reads DCSYTISQVR…QIVYKLEMKK (268 aa). Cysteines 135 and 328 form a disulfide. Asn-248 carries an N-linked (GlcNAc...) asparagine glycan.

The protein belongs to the OLFML3 family.

The protein localises to the secreted. Functionally, secreted scaffold protein that plays an essential role in dorsoventral patterning during early development. Stabilizes axial formation by restricting chordin (CHRD) activity on the dorsal side. Acts by facilitating the association between the tolloid proteases and their substrate chordin (CHRD), leading to enhance chordin (CHRD) degradation. May have matrix-related function involved in placental and embryonic development, or play a similar role in other physiological processes. The sequence is that of Olfactomedin-like protein 3 (Olfml3) from Rattus norvegicus (Rat).